The chain runs to 319 residues: Dimethyladenosine transferase (319 aa).

S-adenosyl-L-methionine contacts are provided by His37, Leu39, Gly64, Glu85, Asp113, and Asn128.

This sequence belongs to the class I-like SAM-binding methyltransferase superfamily. rRNA adenine N(6)-methyltransferase family.

The enzyme catalyses adenosine(1779)/adenosine(1780) in 18S rRNA + 4 S-adenosyl-L-methionine = N(6)-dimethyladenosine(1779)/N(6)-dimethyladenosine(1780) in 18S rRNA + 4 S-adenosyl-L-homocysteine + 4 H(+). Its function is as follows. Specifically dimethylates two adjacent adenosines in the loop of a conserved hairpin near the 3'-end of 18S rRNA in the 40S particle. The chain is Dimethyladenosine transferase (DIM1) from Eremothecium gossypii (strain ATCC 10895 / CBS 109.51 / FGSC 9923 / NRRL Y-1056) (Yeast).